The sequence spans 391 residues: Alkanesulfonate monooxygenase (391 aa).

Belongs to the SsuD family.

The catalysed reaction is an alkanesulfonate + FMNH2 + O2 = an aldehyde + FMN + sulfite + H2O + 2 H(+). Its function is as follows. Catalyzes the desulfonation of aliphatic sulfonates. The sequence is that of Alkanesulfonate monooxygenase from Paracidovorax citrulli (strain AAC00-1) (Acidovorax citrulli).